Reading from the N-terminus, the 725-residue chain is Polyribonucleotide nucleotidyltransferase (725 aa).

2 residues coordinate Mg(2+): Asp487 and Asp493. The region spanning 554–613 is the KH domain; that stretch reads PRIETMQIPTDKIREVIGTGGKVIREIVEKTGAKIDIQDTGVIKIASSDAKAIKAAYNWI. The S1 motif domain occupies 623–691; it reads GMIYDGTVVK…ERGKIRLSMK (69 aa). The disordered stretch occupies residues 697 to 725; it reads TGEDITEKLKAEREADRNRERQARQSAGE. The span at 701-719 shows a compositional bias: basic and acidic residues; that stretch reads ITEKLKAEREADRNRERQA.

Belongs to the polyribonucleotide nucleotidyltransferase family. It depends on Mg(2+) as a cofactor.

The protein localises to the cytoplasm. It carries out the reaction RNA(n+1) + phosphate = RNA(n) + a ribonucleoside 5'-diphosphate. In terms of biological role, involved in mRNA degradation. Catalyzes the phosphorolysis of single-stranded polyribonucleotides processively in the 3'- to 5'-direction. The chain is Polyribonucleotide nucleotidyltransferase from Methylobacterium nodulans (strain LMG 21967 / CNCM I-2342 / ORS 2060).